Reading from the N-terminus, the 235-residue chain is RNA pyrophosphohydrolase (235 aa).

Residues 6 to 149 enclose the Nudix hydrolase domain; sequence GFRPNVGIIL…KRGVYEMALT (144 aa). Positions 38–59 match the Nudix box motif; the sequence is GGIDRGENPEQAMFRELHEEVG. The tract at residues 184 to 235 is disordered; sequence ANQSGEPGSFPAAGGIPSYATRPGAPFELPPGATFEPDPQTSFGVNAPTKKT.

Belongs to the Nudix hydrolase family. RppH subfamily. A divalent metal cation is required as a cofactor.

Accelerates the degradation of transcripts by removing pyrophosphate from the 5'-end of triphosphorylated RNA, leading to a more labile monophosphorylated state that can stimulate subsequent ribonuclease cleavage. This chain is RNA pyrophosphohydrolase, found in Polaromonas naphthalenivorans (strain CJ2).